The chain runs to 474 residues: Equilibrative nucleoside transporter 3 (474 aa).

Over Met1 to Thr53 the chain is Cytoplasmic. Phosphoserine occurs at positions 21 and 23. A Dileucine internalization motif motif is present at residues Leu31–Leu32. Residues Tyr54 to Ala74 traverse the membrane as a helical segment. Topologically, residues Gln75–Ser105 are extracellular. N-linked (GlcNAc...) asparagine glycosylation occurs at Asn84. The helical transmembrane segment at Tyr106–Val126 threads the bilayer. Topologically, residues Asn127 to Arg134 are cytoplasmic. The helical transmembrane segment at Val135 to Val155 threads the bilayer. At Asp156–Thr161 the chain is on the extracellular side. A helical transmembrane segment spans residues His162–Phe182. Over Asn183 to Leu201 the chain is Cytoplasmic. Residues Ile202 to Val222 form a helical membrane-spanning segment. At Ala223–Thr230 the chain is on the extracellular side. Residues Leu231–Leu251 form a helical membrane-spanning segment. Residues Pro252–Thr305 are Cytoplasmic-facing. Positions Glu272 to Thr294 are disordered. A compositionally biased stretch (polar residues) spans Pro276–Pro292. The helical transmembrane segment at Gly306–Cys326 threads the bilayer. Residues Thr327–Pro339 are Extracellular-facing. Residues Trp340 to Ala357 form a helical membrane-spanning segment. Residues Asp358 to Lys376 lie on the Cytoplasmic side of the membrane. A helical transmembrane segment spans residues Ala377–Tyr397. Over Gln398–Pro414 the chain is Extracellular. The chain crosses the membrane as a helical span at residues Val415 to Tyr435. Over Gly436–Thr453 the chain is Cytoplasmic. A helical membrane pass occupies residues Phe454–Ile474.

Belongs to the SLC29A/ENT transporter (TC 2.A.57) family.

Its subcellular location is the lysosome membrane. The protein resides in the late endosome membrane. The protein localises to the mitochondrion membrane. It localises to the cell membrane. The enzyme catalyses adenosine(in) = adenosine(out). The catalysed reaction is guanosine(in) = guanosine(out). It catalyses the reaction inosine(in) = inosine(out). It carries out the reaction uridine(out) = uridine(in). The enzyme catalyses cytidine(in) = cytidine(out). The catalysed reaction is thymidine(in) = thymidine(out). It catalyses the reaction 2'-deoxyadenosine(in) = 2'-deoxyadenosine(out). It carries out the reaction 2'-deoxycytidine(in) = 2'-deoxycytidine(out). The enzyme catalyses guanine(out) = guanine(in). The catalysed reaction is uracil(in) = uracil(out). It catalyses the reaction (R)-noradrenaline(out) = (R)-noradrenaline(in). It carries out the reaction dopamine(out) = dopamine(in). The enzyme catalyses serotonin(out) = serotonin(in). The catalysed reaction is tyramine(in) = tyramine(out). It catalyses the reaction ATP(in) = ATP(out). In terms of biological role, uniporter that mediates the facilitative transport of nucleoside across lysosomal and mitochondrial membranes. Functions as a non-electrogenic Na(+)-independent transporter. Substrate transport is pH-dependent and enhanced under acidic condition, probably reflecting the location of the transporter in acidic intracellular compartments. Proton is not a cotransporting ion but most likely change the ionization state of the transporter which dictates transport-permissible/impermissible conformation for nucleoside translocation. May direct the nucleoside transport from lysosomes to cytosol or cytosol to mitochondria to facilitate the fundamental function of salvage synthesis of nucleic acids. Involved in the transport of nucleosides (adenosine, guanosine, uridine, thymidine, cytidine and inosine) and deoxynucleosides (deoxyadenosine, deoxycytidine). Also mediates transport of purine nucleobases (adenine, guanine) and pyrimidine nucleobases (uracil). Also able to transport monoamine neurotransmitters dopamine, serotonin, noradrenaline and tyramine. Capable of transporting ATP. Mediates nucleoside export from lysosomes in macrophages, which regulates macrophage functions and numbers. In Bos taurus (Bovine), this protein is Equilibrative nucleoside transporter 3 (SLC29A3).